Here is a 335-residue protein sequence, read N- to C-terminus: Fructokinase-2 (335 aa).

This sequence belongs to the carbohydrate kinase PfkB family. In terms of tissue distribution, expressed in roots, at higher levels in stems, and hardly detectable in leaves.

The enzyme catalyses D-fructose + ATP = D-fructose 6-phosphate + ADP + H(+). It participates in glycan biosynthesis; starch biosynthesis. Its activity is regulated as follows. Inhibited at high fructose. Its function is as follows. May play an important role in maintaining the flux of carbon towards starch formation. May also be involved in a sugar-sensing pathway. The protein is Fructokinase-2 (FRK2) of Zea mays (Maize).